A 439-amino-acid chain; its full sequence is Ribosomal protein uS12 methylthiotransferase RimO (439 aa).

The MTTase N-terminal domain maps to 7 to 119 (KQLCLISLGC…IDIMIAKKQN (113 aa)). Residues cysteine 16, cysteine 50, cysteine 82, cysteine 151, cysteine 155, and cysteine 158 each coordinate [4Fe-4S] cluster. In terms of domain architecture, Radical SAM core spans 137-368 (TGSSVHAYVK…ALKHQNHSFK (232 aa)).

This sequence belongs to the methylthiotransferase family. RimO subfamily. [4Fe-4S] cluster serves as cofactor.

The protein resides in the cytoplasm. The catalysed reaction is L-aspartate(89)-[ribosomal protein uS12]-hydrogen + (sulfur carrier)-SH + AH2 + 2 S-adenosyl-L-methionine = 3-methylsulfanyl-L-aspartate(89)-[ribosomal protein uS12]-hydrogen + (sulfur carrier)-H + 5'-deoxyadenosine + L-methionine + A + S-adenosyl-L-homocysteine + 2 H(+). Functionally, catalyzes the methylthiolation of an aspartic acid residue of ribosomal protein uS12. The chain is Ribosomal protein uS12 methylthiotransferase RimO from Helicobacter pylori (strain G27).